The chain runs to 183 residues: Translation initiation factor IF-3 (183 aa).

It belongs to the IF-3 family. Monomer.

The protein resides in the cytoplasm. Its function is as follows. IF-3 binds to the 30S ribosomal subunit and shifts the equilibrium between 70S ribosomes and their 50S and 30S subunits in favor of the free subunits, thus enhancing the availability of 30S subunits on which protein synthesis initiation begins. This is Translation initiation factor IF-3 from Serratia marcescens.